We begin with the raw amino-acid sequence, 279 residues long: uncharacterized protein (279 aa).

The signal sequence occupies residues 1–31 (MLVQSRTLVTAILSCSLVFGTTVNGASVAIA).

This is an uncharacterized protein from Corynebacterium glutamicum (strain ATCC 13032 / DSM 20300 / JCM 1318 / BCRC 11384 / CCUG 27702 / LMG 3730 / NBRC 12168 / NCIMB 10025 / NRRL B-2784 / 534).